The primary structure comprises 172 residues: MASKAIFFFFVSAVCLSSLAGVAIADADDFDRFQIQGSVYCDTCRVQFVTRLSKFLEGAKVKLECRSRTNGTVTLTKEAVTDKTGSYRMEVTGDHEEEVCELVLVESPDSGCSDVSKEAYLRNAAKISLTANDGIVSHETRIVNPLGFMVQTPSAECPAAFKELGIVPDVTF.

Positions 1–27 are cleaved as a signal peptide; that stretch reads MASKAIFFFFVSAVCLSSLAGVAIADA. 3 cysteine pairs are disulfide-bonded: Cys41–Cys112, Cys44–Cys157, and Cys65–Cys100. N-linked (GlcNAc...) asparagine glycosylation occurs at Asn70.

This sequence belongs to the Ole e I family.

It is found in the secreted. In Arabidopsis thaliana (Mouse-ear cress), this protein is Pollen-specific protein-like At4g18596.